Consider the following 120-residue polypeptide: Large ribosomal subunit protein uL18 (120 aa).

This sequence belongs to the universal ribosomal protein uL18 family. As to quaternary structure, part of the 50S ribosomal subunit; part of the 5S rRNA/L5/L18/L25 subcomplex. Contacts the 5S and 23S rRNAs.

Functionally, this is one of the proteins that bind and probably mediate the attachment of the 5S RNA into the large ribosomal subunit, where it forms part of the central protuberance. The protein is Large ribosomal subunit protein uL18 of Brucella anthropi (strain ATCC 49188 / DSM 6882 / CCUG 24695 / JCM 21032 / LMG 3331 / NBRC 15819 / NCTC 12168 / Alc 37) (Ochrobactrum anthropi).